A 207-amino-acid chain; its full sequence is ATP synthase subunit b 2 (207 aa).

Low complexity predominate over residues 1 to 31; sequence MVAQAAPPAGTAGQGTHEAASAAHGAAAAHG. A disordered region spans residues 1–41; the sequence is MVAQAAPPAGTAGQGTHEAASAAHGAAAAHGAAEEGHGKKS. A helical membrane pass occupies residues 48–70; sequence ATTFASQLLWLVLSFGLLYLLMS.

The protein belongs to the ATPase B chain family. As to quaternary structure, F-type ATPases have 2 components, F(1) - the catalytic core - and F(0) - the membrane proton channel. F(1) has five subunits: alpha(3), beta(3), gamma(1), delta(1), epsilon(1). F(0) has three main subunits: a(1), b(2) and c(10-14). The alpha and beta chains form an alternating ring which encloses part of the gamma chain. F(1) is attached to F(0) by a central stalk formed by the gamma and epsilon chains, while a peripheral stalk is formed by the delta and b chains.

It is found in the cell inner membrane. Its function is as follows. F(1)F(0) ATP synthase produces ATP from ADP in the presence of a proton or sodium gradient. F-type ATPases consist of two structural domains, F(1) containing the extramembraneous catalytic core and F(0) containing the membrane proton channel, linked together by a central stalk and a peripheral stalk. During catalysis, ATP synthesis in the catalytic domain of F(1) is coupled via a rotary mechanism of the central stalk subunits to proton translocation. Component of the F(0) channel, it forms part of the peripheral stalk, linking F(1) to F(0). This is ATP synthase subunit b 2 from Xanthobacter autotrophicus (strain ATCC BAA-1158 / Py2).